Consider the following 191-residue polypeptide: Glucose-6-phosphate 1-dehydrogenase (191 aa).

Ala2 carries the N-acetylalanine modification. Phosphoserine is present on Ser8. Residue Thr10 is modified to Phosphothreonine. NADP(+) is bound by residues 38 to 45 (GASGDLAK) and Tyr86. Asp101 contributes to the D-glucose 6-phosphate binding site. His106 acts as the Proton acceptor in catalysis. Arg163 contributes to the NADP(+) binding site. Lys173 carries the post-translational modification N6-acetyllysine. NADP(+)-binding residues include Tyr179 and Trp185. Tyr179 carries the phosphotyrosine modification.

This sequence belongs to the glucose-6-phosphate dehydrogenase family. In terms of assembly, homotetramer; dimer of dimers. Interacts with SIRT2; the interaction is enhanced by H(2)O(2) treatment. Forms a ternary complex with ALDOB and TP53; this interaction is direct. ALDOB stabilizes the complex inhibiting G6PD activity and keeping oxidative pentose phosphate metabolism in check. Acetylated by ELP3; acetylation inhibits its homodimerization and enzyme activity. Deacetylated by SIRT2; deacetylation stimulates its enzyme activity.

It localises to the cytoplasm. It is found in the cytosol. The protein resides in the membrane. The catalysed reaction is D-glucose 6-phosphate + NADP(+) = 6-phospho-D-glucono-1,5-lactone + NADPH + H(+). It functions in the pathway carbohydrate degradation; pentose phosphate pathway; D-ribulose 5-phosphate from D-glucose 6-phosphate (oxidative stage): step 1/3. Functionally, cytosolic glucose-6-phosphate dehydrogenase that catalyzes the first and rate-limiting step of the oxidative branch within the pentose phosphate pathway/shunt, an alternative route to glycolysis for the dissimilation of carbohydrates and a major source of reducing power and metabolic intermediates for fatty acid and nucleic acid biosynthetic processes. The polypeptide is Glucose-6-phosphate 1-dehydrogenase (G6PD) (Didelphis virginiana (North American opossum)).